A 433-amino-acid polypeptide reads, in one-letter code: N-lysine methyltransferase SMYD2 (433 aa).

In terms of domain architecture, SET spans 7 to 241 (GGLERFCSPG…PGEEVFTSYI (235 aa)). Residue 17-19 (KGR) coordinates S-adenosyl-L-methionine. Residues cysteine 52, cysteine 55, cysteine 65, cysteine 68, cysteine 74, cysteine 78, histidine 86, and cysteine 90 each coordinate Zn(2+). Residues 52–90 (CEFCFARKEGLSKCGRCKQAFYCNVECQREDWPMHKLEC) form an MYND-type zinc finger. S-adenosyl-L-methionine-binding positions include histidine 137, 206 to 207 (NH), and 258 to 260 (YFF).

The protein belongs to the class V-like SAM-binding methyltransferase superfamily. Interacts with RNA polymerase II and HELZ. Interacts with SIN3A and HDAC1. Interacts (via MYND-type zinc finger) with EPB41L3. Interacts (via SET domain) with p53/TP53. Interacts with RB1 and HSP90AA1.

Its subcellular location is the cytoplasm. The protein resides in the cytosol. The protein localises to the nucleus. The catalysed reaction is L-lysyl(4)-[histone H3] + 3 S-adenosyl-L-methionine = N(6),N(6),N(6)-trimethyl-L-lysyl(4)-[histone H3] + 3 S-adenosyl-L-homocysteine + 3 H(+). It catalyses the reaction L-lysyl-[protein] + S-adenosyl-L-methionine = N(6)-methyl-L-lysyl-[protein] + S-adenosyl-L-homocysteine + H(+). In terms of biological role, protein-lysine N-methyltransferase that methylates both histones and non-histone proteins, including p53/TP53 and RB1. Specifically trimethylates histone H3 'Lys-4' (H3K4me3) in vivo. The activity requires interaction with HSP90alpha. Shows even higher methyltransferase activity on p53/TP53. Monomethylates 'Lys-370' of p53/TP53, leading to decreased DNA-binding activity and subsequent transcriptional regulation activity of p53/TP53. Monomethylates RB1 at 'Lys-860'. This is N-lysine methyltransferase SMYD2 (SMYD2) from Bos taurus (Bovine).